Here is a 504-residue protein sequence, read N- to C-terminus: Anaerobic nitric oxide reductase transcription regulator NorR (504 aa).

A 4-aspartylphosphate modification is found at Asp-57. Positions 187-416 (MIGLSPGMTQ…LEHAIHRAVV (230 aa)) constitute a Sigma-54 factor interaction domain. Residues 215-222 (GETGTGKE) and 278-287 (ADNGTLFLDE) each bind ATP. Positions 479–498 (WAACARMLETDVANLHRLAK) form a DNA-binding region, H-T-H motif.

It participates in nitrogen metabolism; nitric oxide reduction. Its function is as follows. Required for the expression of anaerobic nitric oxide (NO) reductase, acts as a transcriptional activator for at least the norVW operon. Activation also requires sigma-54. In Escherichia coli O139:H28 (strain E24377A / ETEC), this protein is Anaerobic nitric oxide reductase transcription regulator NorR.